A 907-amino-acid polypeptide reads, in one-letter code: Leucine-rich repeat-containing G-protein coupled receptor 5 (907 aa).

The signal sequence occupies residues 1–21 (MDTSRLGVLLSLPVLLQLATG). Topologically, residues 22–561 (GSSPRSGVLL…EHLLDGWLIR (540 aa)) are extracellular. An LRRNT domain is found at 25–66 (PRSGVLLRGCPTHCHCEPDGRMLLRVDCSDLGLSELPSNLSV). Cystine bridges form between cysteine 34-cysteine 40 and cysteine 38-cysteine 52. 2 N-linked (GlcNAc...) asparagine glycosylation sites follow: asparagine 63 and asparagine 77. LRR repeat units lie at residues 67–90 (FTSYLDLSMNNISQLLPNPLPSLR), 91–112 (FLEELRLAGNALTYIPKGAFTG), 115–136 (SLKVLMLQNNQLRHVPTEALQN), 139–160 (SLQSLRLDANHISYVPPSCFSG), 163–184 (SLRHLWLDDNALTEIPVQAFRS), 187–208 (ALQAMTLALNKIHHIPDYAFGN), 211–232 (SLVVLHLHNNRIHSLGKKCFDG), 235–256 (SLETLDLNYNNLDEFPTAIRTL), 258–279 (NLKELGFHSNNIRSIPEKAFVG), 282–303 (SLITIHFYDNPIQFVGRSAFQH), 306–328 (ELRTLTLNGASQITEFPDLTGTA), 329–350 (NLESLTLTGAQISSLPQTVCNQ), 353–374 (NLQVLDLSYNLLEDLPSFSVCQ), 375–396 (KLQKIDLRHNEIYEIKVDTFQQ), 399–420 (SLRSLNLAWNKIAIIHPNAFST), and 423–446 (SLIKLDLSSNLLSSFPITGLHGLT). The N-linked (GlcNAc...) asparagine glycan is linked to asparagine 208. Cysteine 348 and cysteine 373 are joined by a disulfide. Cysteine 479 and cysteine 541 are joined by a disulfide. N-linked (GlcNAc...) asparagine glycosylation is present at asparagine 500. Residues 562-582 (IGVWTIAVLALTCNALVTSTV) traverse the membrane as a helical segment. Topologically, residues 583 to 593 (FRSPLYISPIK) are cytoplasmic. A helical transmembrane segment spans residues 594 to 614 (LLIGVIAAVNMLTGVSSAVLA). Topologically, residues 615–638 (GVDAFTFGSFARHGAWWENGVGCH) are extracellular. Residues cysteine 637 and cysteine 712 are joined by a disulfide bond. A helical membrane pass occupies residues 639-659 (VIGFLSIFASESSVFLLTLAA). The Cytoplasmic portion of the chain corresponds to 660–682 (LERGFSVKYSAKFETKAPFSSLK). Residues 683–703 (VIILLCALLALTMAAVPLLGG) traverse the membrane as a helical segment. Topologically, residues 704 to 722 (SKYGASPLCLPLPFGEPST) are extracellular. Residues 723 to 743 (MGYMVALILLNSLCFLMMTIA) form a helical membrane-spanning segment. Residues 744–767 (YTKLYCNLDKGDLENIWDCSMVKH) lie on the Cytoplasmic side of the membrane. The helical transmembrane segment at 768 to 788 (IALLLFTNCILNCPVAFLSFS) threads the bilayer. The Extracellular segment spans residues 789-802 (SLINLTFISPEVIK). Residue asparagine 792 is glycosylated (N-linked (GlcNAc...) asparagine). A helical membrane pass occupies residues 803–823 (FILLVVVPLPACLNPLLYILF). Topologically, residues 824 to 907 (NPHFKEDLVS…LSSVAFVPCL (84 aa)) are cytoplasmic.

It belongs to the G-protein coupled receptor 1 family. As to quaternary structure, identified in a complex composed of RNF43, LGR5 and RSPO1. Also interacts with other R-spondin ligands, including RSPO2, RSPO3 and RSPO4. As to expression, expressed in skeletal muscle, placenta, spinal cord, and various region of brain. Expressed at the base of crypts in colonic and small mucosa stem cells. In premalignant cancer expression is not restricted to the cript base. Overexpressed in cancers of the ovary, colon and liver.

The protein resides in the cell membrane. It localises to the golgi apparatus. It is found in the trans-Golgi network membrane. In terms of biological role, receptor for R-spondins that potentiates the canonical Wnt signaling pathway and acts as a stem cell marker of the intestinal epithelium and the hair follicle. Upon binding to R-spondins (RSPO1, RSPO2, RSPO3 or RSPO4), associates with phosphorylated LRP6 and frizzled receptors that are activated by extracellular Wnt receptors, triggering the canonical Wnt signaling pathway to increase expression of target genes. In contrast to classical G-protein coupled receptors, does not activate heterotrimeric G-proteins to transduce the signal. Involved in the development and/or maintenance of the adult intestinal stem cells during postembryonic development. In Homo sapiens (Human), this protein is Leucine-rich repeat-containing G-protein coupled receptor 5 (LGR5).